The primary structure comprises 306 residues: Acetyl-coenzyme A carboxylase carboxyl transferase subunit beta (306 aa).

The region spanning leucine 25–threonine 294 is the CoA carboxyltransferase N-terminal domain. Low complexity predominate over residues asparagine 287–serine 296. The tract at residues asparagine 287 to alanine 306 is disordered.

The protein belongs to the AccD/PCCB family. Acetyl-CoA carboxylase is a heterohexamer composed of biotin carboxyl carrier protein (AccB), biotin carboxylase (AccC) and two subunits each of ACCase subunit alpha (AccA) and ACCase subunit beta (AccD).

It localises to the cytoplasm. It carries out the reaction N(6)-carboxybiotinyl-L-lysyl-[protein] + acetyl-CoA = N(6)-biotinyl-L-lysyl-[protein] + malonyl-CoA. It participates in lipid metabolism; malonyl-CoA biosynthesis; malonyl-CoA from acetyl-CoA: step 1/1. In terms of biological role, component of the acetyl coenzyme A carboxylase (ACC) complex. Biotin carboxylase (BC) catalyzes the carboxylation of biotin on its carrier protein (BCCP) and then the CO(2) group is transferred by the transcarboxylase to acetyl-CoA to form malonyl-CoA. The sequence is that of Acetyl-coenzyme A carboxylase carboxyl transferase subunit beta from Bartonella henselae (strain ATCC 49882 / DSM 28221 / CCUG 30454 / Houston 1) (Rochalimaea henselae).